We begin with the raw amino-acid sequence, 455 residues long: Fez family zinc finger protein 2 (455 aa).

The interval 1–22 is disordered; the sequence is MASSASLETMVPPACPRAGASP. Positions 27–42 match the Engrailed homology 1 repressor motif; the sequence is TLAFSIERIMAKTSEP. C2H2-type zinc fingers lie at residues 272–294, 300–322, 328–350, 356–378, 384–406, and 412–435; these read FTCEVCGKVFNAHYNLTRHMPVH, FVCKVCGKGFRQASTLCRHKIIH, HKCNQCGKAFNRSSTLNTHIRIH, FVCEFCGKGFHQKGNYKNHKLTH, YKCTICNKAFHQVYNLTFHMHTH, and FTCATCGKGFCRNFDLKKHVRKLH.

Belongs to the krueppel C2H2-type zinc-finger protein family. Highly expressed in neocortical layer V, moderately expressed in layer VI. Expressed in subcortically projecting neurons.

The protein resides in the nucleus. Its function is as follows. Transcription repressor. Required for the specification of corticospinal motor neurons and other subcerebral projection neurons. May play a role in layer and neuronal subtype-specific patterning of subcortical projections and axonal fasciculation. Controls the development of dendritic arborization and spines of large layer V pyramidal neurons. Plays a role in rostro-caudal patterning of the diencephalon and in prethalamic formation. The chain is Fez family zinc finger protein 2 (Fezf2) from Mus musculus (Mouse).